Reading from the N-terminus, the 92-residue chain is MDNDKEIVKAYASLWNNRSLAHDDAEAVAEAIDLELLDKRTHPRLRKPMLEKYFAAIQRIVNSQLEPAVKYQLVKLHTERAEYLKEERGEQS.

This is an uncharacterized protein from Bacillus subtilis (strain 168).